A 71-amino-acid chain; its full sequence is UPF0435 protein SERP1418 (71 aa).

This sequence belongs to the UPF0435 family.

The sequence is that of UPF0435 protein SERP1418 from Staphylococcus epidermidis (strain ATCC 35984 / DSM 28319 / BCRC 17069 / CCUG 31568 / BM 3577 / RP62A).